Reading from the N-terminus, the 106-residue chain is MFAVIETGGKQYKVKPGQRLRVESLAGEVGDKIAFDKVLLVAAGEEVSVGAPYVAGGSVQATIANHGRHKKVTIIKFRRRKHSMKRQGHRQNYTEIVIDTINGKTE.

Belongs to the bacterial ribosomal protein bL21 family. Part of the 50S ribosomal subunit. Contacts protein L20.

In terms of biological role, this protein binds to 23S rRNA in the presence of protein L20. The sequence is that of Large ribosomal subunit protein bL21 from Dichelobacter nodosus (strain VCS1703A).